The primary structure comprises 336 residues: Nuclear egress protein 2 (336 aa).

Residues 1–315 (MASPEERLLD…AWRYSWRATP (315 aa)) lie on the Perinuclear space side of the membrane. 2 disordered regions span residues 193–221 (RSGQVEDTGARVTGGGGPRPGVTHSGCLG) and 277–297 (RTRETRRMRGSHSRVEHVPPE). Basic residues predominate over residues 277-288 (RTRETRRMRGSH). Residues 316–333 (YLARVLAVTAVALLLMFL) traverse the membrane as a helical segment. The Nuclear portion of the chain corresponds to 334–336 (RWT).

This sequence belongs to the herpesviridae NEC2 protein family. Forms a heterodimeric viral nuclear egress complex (NEC) with NEC1. Interacts with host IKBKE; this interaction inhibits host IKBKE kinase activity and IRF3 nuclear translocation. In terms of processing, phosphorylated.

Its subcellular location is the host nucleus inner membrane. It localises to the host cytoplasm. It is found in the host perinuclear region. In terms of biological role, plays an essential role in virion nuclear egress, the first step of virion release from infected cell. Within the host nucleus, NEC1 interacts with the newly formed capsid through the vertexes and directs it to the inner nuclear membrane by associating with NEC2. Induces the budding of the capsid at the inner nuclear membrane as well as its envelopment into the perinuclear space. There, the NEC1/NEC2 complex promotes the fusion of the enveloped capsid with the outer nuclear membrane and the subsequent release of the viral capsid into the cytoplasm where it will reach the secondary budding sites in the host Golgi or trans-Golgi network. Inhibits host IKBKE and IRF3, thereby impairing type I IFN signaling. The protein is Nuclear egress protein 2 of Homo sapiens (Human).